Here is a 1361-residue protein sequence, read N- to C-terminus: Xanthine dehydrogenase 1 (1361 aa).

The region spanning 15–101 (TEALLYVNGV…GMHVISIEGL (87 aa)) is the 2Fe-2S ferredoxin-type domain. 8 residues coordinate [2Fe-2S] cluster: C53, C58, C61, C83, C123, C126, C159, and C161. Positions 257 to 442 (RGNGGITWYR…LSVFLPWTRP (186 aa)) constitute an FAD-binding PCMH-type domain. FAD-binding positions include 285–292 (LLVGNTEV), F365, 375–379 (CIGGN), D388, L432, and K450. The Mo-molybdopterin site is built by Q796 and F827. The substrate site is built by E831 and R909. Mo-molybdopterin is bound at residue R941. The substrate site is built by F943 and T1039. Residue A1108 participates in Mo-molybdopterin binding. The Proton acceptor role is filled by E1297.

The protein belongs to the xanthine dehydrogenase family. Homodimer. It depends on [2Fe-2S] cluster as a cofactor. FAD serves as cofactor. The cofactor is Mo-molybdopterin. As to expression, expressed in roots, leaves, stems, flowers and siliques.

The catalysed reaction is xanthine + NAD(+) + H2O = urate + NADH + H(+). The enzyme catalyses hypoxanthine + NAD(+) + H2O = xanthine + NADH + H(+). Key enzyme involved in purine catabolism. Catalyzes the oxidation of hypoxanthine to xanthine and the oxidation of xanthine to urate. Regulates the level of ureides and plays an important role during plant growth and development, senescence and response to stresses. Possesses NADH oxidase activity and may contribute to the generation of superoxide anions in planta. The protein is Xanthine dehydrogenase 1 (XDH1) of Arabidopsis thaliana (Mouse-ear cress).